A 119-amino-acid chain; its full sequence is Protein Wnt-4 (119 aa).

A lipid anchor (O-palmitoleoyl serine; by PORCN) is attached at S1. Intrachain disulfides connect C69-C100 and C85-C95. N-linked (GlcNAc...) asparagine glycosylation is present at N86.

It belongs to the Wnt family. Post-translationally, palmitoleoylation is required for efficient binding to frizzled receptors. Depalmitoleoylation leads to Wnt signaling pathway inhibition.

It localises to the secreted. The protein resides in the extracellular space. Its subcellular location is the extracellular matrix. Functionally, ligand for members of the frizzled family of seven transmembrane receptors. Plays an important role in embryonic development. In Meleagris gallopavo (Wild turkey), this protein is Protein Wnt-4 (WNT4).